The following is a 261-amino-acid chain: Uridylate kinase (261 aa).

Residues 1 to 23 are disordered; that stretch reads MTEPDVAGAPASKPEPASTGAAS. Residue 36 to 39 coordinates ATP; the sequence is KLGG. Residue Gly-77 participates in UMP binding. Residues Gly-78 and Arg-82 each contribute to the ATP site. Residues Asp-97 and 158 to 165 each bind UMP; that span reads MGLPYFST. The ATP site is built by Phe-191 and Asp-194.

It belongs to the UMP kinase family. In terms of assembly, homohexamer.

It is found in the cytoplasm. It catalyses the reaction UMP + ATP = UDP + ADP. Its pathway is pyrimidine metabolism; CTP biosynthesis via de novo pathway; UDP from UMP (UMPK route): step 1/1. With respect to regulation, inhibited by UTP. Its function is as follows. Catalyzes the reversible phosphorylation of UMP to UDP. This Mycobacterium tuberculosis (strain ATCC 25177 / H37Ra) protein is Uridylate kinase.